Reading from the N-terminus, the 510-residue chain is ATP-dependent zinc metalloprotease FtsH 2 (510 aa).

At 1-4 (MKKN) the chain is on the cytoplasmic side. The chain crosses the membrane as a helical span at residues 5-25 (LHIIILALSIFINLLFIYIFI). Topologically, residues 26–31 (SEVKPN) are extracellular. The helical transmembrane segment at 32-52 (LNLNLSFILTAAVIVVTYLLF) threads the bilayer. Residues 53-510 (KNKFSELMPV…LWEEENTLCV (458 aa)) lie on the Cytoplasmic side of the membrane. 124 to 131 (GPPGTGKT) is a binding site for ATP. His343 lines the Zn(2+) pocket. Residue Glu344 is part of the active site. Zn(2+)-binding residues include His347 and Asp418.

It in the central section; belongs to the AAA ATPase family. In the C-terminal section; belongs to the peptidase M41 family. As to quaternary structure, homohexamer. Zn(2+) serves as cofactor.

Its subcellular location is the cell membrane. In terms of biological role, acts as a processive, ATP-dependent zinc metallopeptidase for both cytoplasmic and membrane proteins. Plays a role in the quality control of integral membrane proteins. In Thermoanaerobacter sp. (strain X514), this protein is ATP-dependent zinc metalloprotease FtsH 2.